The chain runs to 230 residues: Small ribosomal subunit protein uS3 (230 aa).

The region spanning 39–107 (VRKFLVEKLQ…PAQINIAEIR (69 aa)) is the KH type-2 domain.

It belongs to the universal ribosomal protein uS3 family. Part of the 30S ribosomal subunit. Forms a tight complex with proteins S10 and S14.

In terms of biological role, binds the lower part of the 30S subunit head. Binds mRNA in the 70S ribosome, positioning it for translation. This chain is Small ribosomal subunit protein uS3, found in Shewanella putrefaciens (strain CN-32 / ATCC BAA-453).